Reading from the N-terminus, the 108-residue chain is Urease subunit beta (108 aa).

Belongs to the urease beta subunit family. Heterotrimer of UreA (gamma), UreB (beta) and UreC (alpha) subunits. Three heterotrimers associate to form the active enzyme.

It is found in the cytoplasm. The catalysed reaction is urea + 2 H2O + H(+) = hydrogencarbonate + 2 NH4(+). The protein operates within nitrogen metabolism; urea degradation; CO(2) and NH(3) from urea (urease route): step 1/1. The protein is Urease subunit beta of Proteus hauseri.